A 91-amino-acid chain; its full sequence is Late embryogenis abundant protein 2 (91 aa).

The segment at 47 to 72 (KRAGEASSEKAPWVPDPKTGYYRPET) is disordered.

Belongs to the LEA type 3 family.

Its subcellular location is the cytoplasm. The protein localises to the nucleus. This Arabidopsis thaliana (Mouse-ear cress) protein is Late embryogenis abundant protein 2.